The sequence spans 1068 residues: Retinoblastoma-like protein 1 (1068 aa).

At threonine 332 the chain carries Phosphothreonine; by CDK2. Residue threonine 369 is modified to Phosphothreonine; by CDK4. A Phosphothreonine; by CDK2 modification is found at threonine 385. Residues 385–584 form a domain A region; it reads TPVASATQSV…WEALQVSANK (200 aa). The tract at residues 385–949 is pocket; binds T and E1A; it reads TPVASATQSV…GRVKSFALKY (565 aa). Residues 585–780 form a spacer region; the sequence is VPTCEEVIFP…AQEVHSTGIN (196 aa). A Phosphoserine; by CDK2 and CDK4 modification is found at serine 640. A phosphoserine mark is found at serine 650 and serine 749. Serine 762 is modified (phosphoserine; by CDK2). The domain B stretch occupies residues 781–949; it reads RPKRTGSLAL…GRVKSFALKY (169 aa). Serine 964 and serine 975 each carry phosphoserine; by CDK2 and CDK4. Serine 988 bears the Phosphoserine; by CDK2 mark. The residue at position 997 (threonine 997) is a Phosphothreonine; by CDK2. Serine 1009 carries the post-translational modification Phosphoserine; by CDK2. Phosphoserine is present on serine 1041.

The protein belongs to the retinoblastoma protein (RB) family. As to quaternary structure, component of the DREAM complex (also named LINC complex) at least composed of E2F4, E2F5, LIN9, LIN37, LIN52, LIN54, MYBL1, MYBL2, RBL1, RBL2, RBBP4, TFDP1 and TFDP2. The complex exists in quiescent cells where it represses cell cycle-dependent genes. It dissociates in S phase when LIN9, LIN37, LIN52 and LIN54 form a subcomplex that binds to MYBL2. Interacts with AATF. Interacts with KDM5A. Interacts with KMT5B and KMT5C. Interacts with USP4. Interacts with RBBP9. (Microbial infection) Interacts with SV40 and JC virus large T antigens. Large T antigen, but not E1A, binds only to the unphosphorylated form. In terms of assembly, (Microbial infection) Interacts with JC virus small t antigen. Post-translationally, cell-cycle arrest properties are inactivated by phosphorylation on Thr-332, Ser-640, Ser-964 and Ser-975 by CDK4.

It localises to the nucleus. In terms of biological role, key regulator of entry into cell division. Directly involved in heterochromatin formation by maintaining overall chromatin structure and, in particular, that of constitutive heterochromatin by stabilizing histone methylation. Recruits and targets histone methyltransferases KMT5B and KMT5C, leading to epigenetic transcriptional repression. Controls histone H4 'Lys-20' trimethylation. Probably acts as a transcription repressor by recruiting chromatin-modifying enzymes to promoters. Potent inhibitor of E2F-mediated trans-activation. May act as a tumor suppressor. This Homo sapiens (Human) protein is Retinoblastoma-like protein 1 (RBL1).